We begin with the raw amino-acid sequence, 405 residues long: Diaminopimelate decarboxylase (405 aa).

K46 is modified (N6-(pyridoxal phosphate)lysine). Pyridoxal 5'-phosphate contacts are provided by residues G225 and 259-262; that span reads EPGR. Positions 262, 298, and 302 each coordinate substrate. C329 functions as the Proton donor in the catalytic mechanism. Substrate is bound by residues E330 and Y358. Y358 provides a ligand contact to pyridoxal 5'-phosphate.

The protein belongs to the Orn/Lys/Arg decarboxylase class-II family. LysA subfamily. In terms of assembly, homodimer. Requires pyridoxal 5'-phosphate as cofactor.

The catalysed reaction is meso-2,6-diaminopimelate + H(+) = L-lysine + CO2. It participates in amino-acid biosynthesis; L-lysine biosynthesis via DAP pathway; L-lysine from DL-2,6-diaminopimelate: step 1/1. Specifically catalyzes the decarboxylation of meso-diaminopimelate (meso-DAP) to L-lysine. The chain is Diaminopimelate decarboxylase from Helicobacter pylori (strain J99 / ATCC 700824) (Campylobacter pylori J99).